The sequence spans 282 residues: Transcription factor MYB20 (282 aa).

HTH myb-type domains are found at residues 9–61 and 62–116; these read KVGL…TNYL and RPDL…KKKL. DNA-binding regions (H-T-H motif) lie at residues 37-61 and 89-112; these read WRAVPKLSGLLRCGKSCRLRWTNYL and WSKIASHLPGRTDNEIKNHWNTHI.

In terms of tissue distribution, expressed in chalaza of mature seeds, cotyledons, rosette leaves, cauline leaves, veins of stems, mature siliques, sepals and styles. Expressed at low levels in roots.

It localises to the nucleus. In terms of biological role, transcription factor that acts as a positive regulator of abscisic acid (ABA) signaling in response to salt stress. Acts as a negative regulator ABI1, ABI2 and PP2CA, which are protein phosphatases 2C acting as negative regulator of ABA signaling. Binds to the DNA specific sequence and core element 5'-ACGT-3' found in the promoters of ABI1 and PP2CA to negatively regulate their expression during ABA-dependent salt stress response. This Arabidopsis thaliana (Mouse-ear cress) protein is Transcription factor MYB20.